We begin with the raw amino-acid sequence, 583 residues long: Aspartate--tRNA ligase (583 aa).

L-aspartate is bound at residue glutamate 174. Residues 198-201 (QITK) are aspartate. Arginine 220 serves as a coordination point for L-aspartate. Residues 220 to 222 (RDE) and glutamine 229 each bind ATP. L-aspartate is bound at residue histidine 443. Glutamate 477 serves as a coordination point for ATP. Arginine 484 contributes to the L-aspartate binding site. 529-532 (GLDR) provides a ligand contact to ATP.

This sequence belongs to the class-II aminoacyl-tRNA synthetase family. Type 1 subfamily. As to quaternary structure, homodimer.

The protein resides in the cytoplasm. It catalyses the reaction tRNA(Asp) + L-aspartate + ATP = L-aspartyl-tRNA(Asp) + AMP + diphosphate. In terms of biological role, catalyzes the attachment of L-aspartate to tRNA(Asp) in a two-step reaction: L-aspartate is first activated by ATP to form Asp-AMP and then transferred to the acceptor end of tRNA(Asp). The polypeptide is Aspartate--tRNA ligase (Streptococcus suis (strain 98HAH33)).